We begin with the raw amino-acid sequence, 465 residues long: Cysteine--tRNA ligase (465 aa).

C28 is a binding site for Zn(2+). The 'HIGH' region signature appears at 30–40; that stretch reads MTVYDYCHLGH. C209, H234, and E238 together coordinate Zn(2+). The short motif at 266-270 is the 'KMSKS' region element; the sequence is KMSKS. ATP is bound at residue K269.

This sequence belongs to the class-I aminoacyl-tRNA synthetase family. As to quaternary structure, monomer. The cofactor is Zn(2+).

Its subcellular location is the cytoplasm. The enzyme catalyses tRNA(Cys) + L-cysteine + ATP = L-cysteinyl-tRNA(Cys) + AMP + diphosphate. In Nitrosomonas europaea (strain ATCC 19718 / CIP 103999 / KCTC 2705 / NBRC 14298), this protein is Cysteine--tRNA ligase.